A 310-amino-acid polypeptide reads, in one-letter code: Ribosomal RNA small subunit methyltransferase H (310 aa).

S-adenosyl-L-methionine contacts are provided by residues 35–37, aspartate 52, phenylalanine 79, aspartate 100, and glutamine 107; that span reads GGH.

Belongs to the methyltransferase superfamily. RsmH family.

The protein resides in the cytoplasm. It carries out the reaction cytidine(1402) in 16S rRNA + S-adenosyl-L-methionine = N(4)-methylcytidine(1402) in 16S rRNA + S-adenosyl-L-homocysteine + H(+). Specifically methylates the N4 position of cytidine in position 1402 (C1402) of 16S rRNA. The protein is Ribosomal RNA small subunit methyltransferase H of Anaeromyxobacter sp. (strain Fw109-5).